The chain runs to 409 residues: Aquaporin-10 (409 aa).

Disordered stretches follow at residues 1–24 (MADA…TTMP) and 47–74 (ADVN…RPLV). The span at 12-22 (TTGTATTAPTT) shows a compositional bias: low complexity. 2 helical membrane passes run 110–130 (FLGS…VVLS) and 138–158 (LSIN…AGGI). The NPA 1 motif lies at 164–166 (NPA). The chain crosses the membrane as a helical span at residues 184–204 (VYMFAQYAGCICASAIVHAIY). N-linked (GlcNAc...) asparagine glycosylation is present at Asn215. 2 helical membrane passes run 241 to 261 (TGLA…LALT) and 270 to 290 (GGVV…AYGF). Positions 297–299 (NPA) match the NPA 2 motif. A helical membrane pass occupies residues 339–359 (IPVVGPHLGALLGAAIYFFFI).

Belongs to the MIP/aquaporin (TC 1.A.8) family.

It localises to the cell membrane. In terms of biological role, aquaglyceroporin that may modulate the water content and osmolytes during anhydrobiosis. In Milnesium tardigradum (Water bear), this protein is Aquaporin-10.